A 271-amino-acid chain; its full sequence is Urease accessory protein UreD (271 aa).

This sequence belongs to the UreD family. UreD, UreF and UreG form a complex that acts as a GTP-hydrolysis-dependent molecular chaperone, activating the urease apoprotein by helping to assemble the nickel containing metallocenter of UreC. The UreE protein probably delivers the nickel.

It localises to the cytoplasm. Functionally, required for maturation of urease via the functional incorporation of the urease nickel metallocenter. The sequence is that of Urease accessory protein UreD from Halalkalibacterium halodurans (strain ATCC BAA-125 / DSM 18197 / FERM 7344 / JCM 9153 / C-125) (Bacillus halodurans).